Reading from the N-terminus, the 154-residue chain is 6,7-dimethyl-8-ribityllumazine synthase (154 aa).

Residues phenylalanine 21, alanine 55–glutamate 57, and cysteine 79–isoleucine 81 contribute to the 5-amino-6-(D-ribitylamino)uracil site. Alanine 84–threonine 85 is a binding site for (2S)-2-hydroxy-3-oxobutyl phosphate. The active-site Proton donor is histidine 87. Phenylalanine 112 is a binding site for 5-amino-6-(D-ribitylamino)uracil. Arginine 126 lines the (2S)-2-hydroxy-3-oxobutyl phosphate pocket.

Belongs to the DMRL synthase family. Forms an icosahedral capsid composed of 60 subunits, arranged as a dodecamer of pentamers.

It carries out the reaction (2S)-2-hydroxy-3-oxobutyl phosphate + 5-amino-6-(D-ribitylamino)uracil = 6,7-dimethyl-8-(1-D-ribityl)lumazine + phosphate + 2 H2O + H(+). Its pathway is cofactor biosynthesis; riboflavin biosynthesis; riboflavin from 2-hydroxy-3-oxobutyl phosphate and 5-amino-6-(D-ribitylamino)uracil: step 1/2. Functionally, catalyzes the formation of 6,7-dimethyl-8-ribityllumazine by condensation of 5-amino-6-(D-ribitylamino)uracil with 3,4-dihydroxy-2-butanone 4-phosphate. This is the penultimate step in the biosynthesis of riboflavin. The sequence is that of 6,7-dimethyl-8-ribityllumazine synthase from Staphylococcus aureus (strain Newman).